The following is a 575-amino-acid chain: Regulatory protein zeste (575 aa).

Residues 1–26 (MSAQGEGGGAGGSGGGGAGSDGGGNA) are compositionally biased toward gly residues. 2 disordered regions span residues 1-53 (MSAQ…LPLT) and 151-174 (SVAS…VKVE). Residues 2–47 (SAQGEGGGAGGSGGGGAGSDGGGNAGQSSTGSGTVAVTNGGNSSAK) form a hydrophobic region. The segment covering 31 to 51 (TGSGTVAVTNGGNSSAKNQLP) has biased composition (polar residues). Residues 48 to 128 (NQLPLTPRFT…WLNSRLRKQY (81 aa)) mediate DNA binding. The segment covering 151 to 164 (SVASAVPQQQQQQH) has biased composition (low complexity).

As to quaternary structure, self-associates forming complexes of several hundred monomers.

It localises to the nucleus. Its function is as follows. Involved in transvection phenomena (= synapsis-dependent gene expression), where the synaptic pairing of chromosomes carrying genes with which zeste interacts influences the expression of these genes. Zeste binds to DNA and stimulates transcription from a nearby promoter. The polypeptide is Regulatory protein zeste (z) (Drosophila melanogaster (Fruit fly)).